The primary structure comprises 496 residues: NADH-quinone oxidoreductase subunit N (496 aa).

Helical transmembrane passes span 16-36, 46-66, 79-99, 116-136, 166-186, 208-228, 245-267, 278-298, 304-324, 331-351, 382-402, 422-442, and 464-484; these read SLSP…VGAI, CVFC…FNGL, ISII…PLAL, FLFM…LIIF, FAMG…FYLA, LIIL…LSLI, LAGY…IFAM, DMLY…ALVQ, MLAF…VANS, LFFY…MLWV, AVIM…SVFW, IIMI…VFMF, and VIVG…GAIL.

This sequence belongs to the complex I subunit 2 family. In terms of assembly, NDH-1 is composed of 14 different subunits. Subunits NuoA, H, J, K, L, M, N constitute the membrane sector of the complex.

The protein localises to the cell inner membrane. The enzyme catalyses a quinone + NADH + 5 H(+)(in) = a quinol + NAD(+) + 4 H(+)(out). NDH-1 shuttles electrons from NADH, via FMN and iron-sulfur (Fe-S) centers, to quinones in the respiratory chain. The immediate electron acceptor for the enzyme in this species is believed to be ubiquinone. Couples the redox reaction to proton translocation (for every two electrons transferred, four hydrogen ions are translocated across the cytoplasmic membrane), and thus conserves the redox energy in a proton gradient. This chain is NADH-quinone oxidoreductase subunit N, found in Campylobacter concisus (strain 13826).